Reading from the N-terminus, the 210-residue chain is Na(+)-translocating NADH-quinone reductase subunit D (210 aa).

5 helical membrane-spanning segments follow: residues 42-62 (FVMT…VSLI), 72-92 (IIVQ…ILKA), 103-123 (VFVG…AFAM), 131-151 (FIDG…VGFF), and 178-198 (NGLM…IWAI).

It belongs to the NqrDE/RnfAE family. In terms of assembly, composed of six subunits; NqrA, NqrB, NqrC, NqrD, NqrE and NqrF.

The protein resides in the cell inner membrane. The enzyme catalyses a ubiquinone + n Na(+)(in) + NADH + H(+) = a ubiquinol + n Na(+)(out) + NAD(+). NQR complex catalyzes the reduction of ubiquinone-1 to ubiquinol by two successive reactions, coupled with the transport of Na(+) ions from the cytoplasm to the periplasm. NqrA to NqrE are probably involved in the second step, the conversion of ubisemiquinone to ubiquinol. The protein is Na(+)-translocating NADH-quinone reductase subunit D of Vibrio cholerae serotype O1 (strain M66-2).